The sequence spans 338 residues: N-acetylmuramate/N-acetylglucosamine kinase (338 aa).

Belongs to the kinase AmgK family.

The catalysed reaction is N-acetyl-D-muramate + ATP = N-acetyl-alpha-D-muramate 1-phosphate + ADP + H(+). It carries out the reaction N-acetyl-D-glucosamine + ATP = N-acetyl-alpha-D-glucosamine 1-phosphate + ADP + H(+). It functions in the pathway cell wall biogenesis; peptidoglycan recycling. In terms of biological role, sugar kinase that catalyzes the ATP-dependent phosphorylation of N-acetylmuramate (MurNAc) and N-acetylglucosamine (GlcNAc) at its C1 hydroxyl group, leading to MurNAc alpha-1P and GlcNAc alpha-1P, respectively. Is involved in peptidoglycan recycling as part of a cell wall recycling pathway that bypasses de novo biosynthesis of the peptidoglycan precursor UDP-MurNAc. Plays a role in intrinsic resistance to fosfomycin, which targets the de novo synthesis of UDP-MurNAc. This chain is N-acetylmuramate/N-acetylglucosamine kinase, found in Pseudomonas aeruginosa (strain ATCC 15692 / DSM 22644 / CIP 104116 / JCM 14847 / LMG 12228 / 1C / PRS 101 / PAO1).